The chain runs to 317 residues: MRAKLLGIVLTTPIAISSFASTETLSFTPDNINADISLGTLSGKTKERVYLAEEGGRKVSQLDWKFNNAAIIKGAINWDLMPQISIGAAGWTTLGSRGGNMVDQDWMDSSNPGTWTDESRHPDTQLNYANEFDLNIKGWLLNEPNYRLGLMAGYQESRYSFTARGGSYIYSSEEGFRDDIGSFPNGERAIGYKQRFKMPYIGLTGSYRYEDFELGGTFKYSGWVESSDNDEHYDPGKRITYRSKVKDQNYYSVAVNAGYYVTPNAKVYVEGAWNRVTNKKGNTSLYDHNNNTSDYSKNGAGIENYNFITTAGLKYTF.

The first 20 residues, 1-20, serve as a signal peptide directing secretion; that stretch reads MRAKLLGIVLTTPIAISSFA. Residues 21 to 31 lie on the Periplasmic side of the membrane; sequence STETLSFTPDN. Residues 32–41 form a beta stranded membrane-spanning segment; that stretch reads INADISLGTL. At 42 to 69 the chain is on the extracellular side; the sequence is SGKTKERVYLAEEGGRKVSQLDWKFNNA. The beta stranded transmembrane segment at 70–78 threads the bilayer; the sequence is AIIKGAINW. At 79-83 the chain is on the periplasmic side; sequence DLMPQ. The chain crosses the membrane as a beta stranded span at residues 84–92; sequence ISIGAAGWT. The Extracellular segment spans residues 93–130; the sequence is TLGSRGGNMVDQDWMDSSNPGTWTDESRHPDTQLNYAN. Catalysis depends on residues D103 and D105. A beta stranded membrane pass occupies residues 131–140; sequence EFDLNIKGWL. Over 141 to 145 the chain is Periplasmic; that stretch reads LNEPN. A beta stranded transmembrane segment spans residues 146-156; the sequence is YRLGLMAGYQE. At 157–197 the chain is on the extracellular side; that stretch reads SRYSFTARGGSYIYSSEEGFRDDIGSFPNGERAIGYKQRFK. The beta stranded transmembrane segment at 198 to 209 threads the bilayer; the sequence is MPYIGLTGSYRY. Residues 210–211 are Periplasmic-facing; that stretch reads ED. The chain crosses the membrane as a beta stranded span at residues 212 to 221; that stretch reads FELGGTFKYS. Residues 222–250 are Extracellular-facing; sequence GWVESSDNDEHYDPGKRITYRSKVKDQNY. Catalysis depends on residues D230 and H232. The chain crosses the membrane as a beta stranded span at residues 251-261; sequence YSVAVNAGYYV. Residues 262 to 264 are Periplasmic-facing; sequence TPN. A beta stranded transmembrane segment spans residues 265 to 274; sequence AKVYVEGAWN. The Extracellular segment spans residues 275–306; sequence RVTNKKGNTSLYDHNNNTSDYSKNGAGIENYN. The chain crosses the membrane as a beta stranded span at residues 307-316; the sequence is FITTAGLKYT. Position 317 (F317) is a topological domain, periplasmic.

Belongs to the peptidase A26 family. In terms of assembly, homopentamer.

The protein resides in the cell outer membrane. It catalyses the reaction Has a virtual requirement for Arg in the P1 position and a slightly less stringent preference for this residue in the P1' position, which can also contain Lys, Gly or Val.. Its activity is regulated as follows. Inhibited by zinc. Functionally, protease that can cleave T7 RNA polymerase, ferric enterobactin receptor protein (FEP), antimicrobial peptide protamine and other proteins. This protease has a specificity for paired basic residues. The chain is Protease 7 (ompT) from Escherichia coli (strain K12).